The chain runs to 621 residues: ATP-dependent lipid A-core flippase (621 aa).

The next 5 membrane-spanning stretches (helical) occupy residues 32-52 (IVAALIAIFGVAATESYLAAF), 91-111 (VWGTENKIWTVPLFLIILVVI), 192-212 (IVLLYLNWQLSLIVVLMFPLL), 286-306 (SPFSELIASIALAVVIFIALW), and 312-332 (YTTIGEFMAFIVAMLQMYAPI). Positions 33–344 (VAALIAIFGV…LANISIPMQT (312 aa)) constitute an ABC transmembrane type-1 domain. The ABC transporter domain maps to 378–611 (FRNVDVEYRS…NGYYTMLRNI (234 aa)). Residue 410-417 (GRSGSGKS) coordinates ATP.

Belongs to the ABC transporter superfamily. Lipid exporter (TC 3.A.1.106) family. As to quaternary structure, homodimer.

The protein resides in the cell inner membrane. The enzyme catalyses ATP + H2O + lipid A-core oligosaccharideSide 1 = ADP + phosphate + lipid A-core oligosaccharideSide 2.. Functionally, involved in lipopolysaccharide (LPS) biosynthesis. Translocates lipid A-core from the inner to the outer leaflet of the inner membrane. Transmembrane domains (TMD) form a pore in the inner membrane and the ATP-binding domain (NBD) is responsible for energy generation. In Neisseria meningitidis serogroup A / serotype 4A (strain DSM 15465 / Z2491), this protein is ATP-dependent lipid A-core flippase.